We begin with the raw amino-acid sequence, 130 residues long: Protein PELPK2 (130 aa).

Positions Met1–Ala32 are cleaved as a signal peptide. 13 repeat units span residues Pro47–Lys51, Pro52–Lys56, Pro58–Lys62, Leu63–Lys67, Pro69–Lys73, Pro74–Lys78, Pro80–Lys84, Pro91–Lys95, Pro97–Lys101, Phe102–Lys106, Pro108–Lys112, Pro113–Lys117, and Phe121–Lys125. The 13 X 5 AA tandem repeat of P-[DEGQ]-[AEFLIV]-[QPT]-K stretch occupies residues Pro47–Lys125. Residues Ile71–Lys84 are compositionally biased toward basic and acidic residues. A disordered region spans residues Ile71–Pro130. Over residues Glu98 to Lys117 the composition is skewed to basic and acidic residues.

The protein localises to the secreted. It localises to the cell wall. The polypeptide is Protein PELPK2 (Arabidopsis thaliana (Mouse-ear cress)).